The following is a 394-amino-acid chain: Anthocyanidin 3-O-glucosyltransferase 6 (394 aa).

The active-site Charge relay is the D37. Residues T59, A267, Q269, H284, W287, N288, S289, and E292 each contribute to the UDP-alpha-D-glucose site. A307 provides a ligand contact to an anthocyanidin. Residues E308 and Q309 each coordinate UDP-alpha-D-glucose.

It belongs to the UDP-glycosyltransferase family. As to expression, expressed in cotyledons and leaves.

The enzyme catalyses an anthocyanidin + UDP-alpha-D-glucose + H(+) = an anthocyanidin 3-O-beta-D-glucoside + UDP. It participates in pigment biosynthesis; anthocyanin biosynthesis. In the presence of other necessary color factors, this glycosylation reaction allows the accumulation of anthocyanin pigments. May be involved in glycosylation of unstable cyanohydrins to produce stable cyanoglucosides. This Manihot esculenta (Cassava) protein is Anthocyanidin 3-O-glucosyltransferase 6 (GT6).